The chain runs to 634 residues: Pheromone-processing carboxypeptidase KEX1 (634 aa).

An N-terminal signal peptide occupies residues 1 to 24 (MKLAMRRASTFALLALSWSAAVSA). At 25-512 (ASSAGDYFVR…DEAKWYAYRK (488 aa)) the chain is on the lumenal side. Residues S177 and D378 contribute to the active site. N-linked (GlcNAc...) asparagine glycosylation occurs at N429. H440 is an active-site residue. The tract at residues 468–498 (NPTDSRLDGEKLPETTVGGAAGNSTSKQEEE) is disordered. N490 carries an N-linked (GlcNAc...) asparagine glycan. A helical membrane pass occupies residues 513 to 533 (SGEVVLVIVAVAAVAWGWYVW). Over 534-634 (RDRRRRRGYQ…EGGPSGGRGR (101 aa)) the chain is Cytoplasmic. Residues 542 to 634 (YQGIFGGSPS…EGGPSGGRGR (93 aa)) are disordered.

This sequence belongs to the peptidase S10 family.

The protein resides in the golgi apparatus. It is found in the trans-Golgi network membrane. It catalyses the reaction Preferential release of a C-terminal arginine or lysine residue.. In terms of biological role, protease with a carboxypeptidase B-like function involved in the C-terminal processing of the lysine and arginine residues from protein precursors. Promotes cell fusion and is involved in the programmed cell death. The polypeptide is Pheromone-processing carboxypeptidase KEX1 (KEX1) (Pyricularia oryzae (strain 70-15 / ATCC MYA-4617 / FGSC 8958) (Rice blast fungus)).